We begin with the raw amino-acid sequence, 346 residues long: SUMO-activating enzyme subunit 1 (346 aa).

Position 1 is an N-acetylmethionine (Met1). An N-acetylvaline; in SUMO-activating enzyme subunit 1, N-terminally processed modification is found at Val2. Ser12 carries the phosphoserine modification. Position 198 is an N6-acetyllysine (Lys198).

The protein belongs to the ubiquitin-activating E1 family. In terms of assembly, heterodimer of SAE1 and UBA2/SAE2. The heterodimer corresponds to the two domains that are encoded on a single polypeptide chain in ubiquitin-activating enzyme E1. Interacts with UBE2I. Expression level increases during S phase and drops in G2 phase (at protein level).

The protein localises to the nucleus. Its pathway is protein modification; protein sumoylation. The heterodimer acts as an E1 ligase for SUMO1, SUMO2, SUMO3, and probably SUMO4. It mediates ATP-dependent activation of SUMO proteins followed by formation of a thioester bond between a SUMO protein and a conserved active site cysteine residue on UBA2/SAE2. This is SUMO-activating enzyme subunit 1 (SAE1) from Homo sapiens (Human).